The primary structure comprises 463 residues: Peptidase inhibitor 16 (463 aa).

Residues 1 to 27 (MHGSCSFLMLLLPLLLLLVATTGPVGA) form the signal peptide. The SCP domain occupies 37-165 (VELHNLYRAQ…TNIELLVCNY (129 aa)). Asn-114 carries N-linked (GlcNAc...) asparagine glycosylation. Disordered regions lie at residues 262–281 (TQAP…TEAP), 303–341 (EPVT…DPKM), and 383–408 (LQAT…SATA). The segment covering 318-327 (SADKVTDKTK) has biased composition (basic and acidic residues). An O-glycosylated at one site region spans residues 386–395 (TLDHTGHTSS). Residues 392–408 (HTSSKSLPNFPNTSATA) show a composition bias toward polar residues. Residues Asn-403 and Asn-409 are each glycosylated (N-linked (GlcNAc...) asparagine).

The protein belongs to the CRISP family. As to quaternary structure, interacts with PSP94/MSMB. Post-translationally, N- and O-glycosylated. O-glycosylated with core 1 or possibly core 8 glycans. In terms of tissue distribution, expressed in prostate, testis, ovary and intestine. Concentrates in prostate cancer patient's sera.

It is found in the secreted. May inhibit cardiomyocyte growth. In Homo sapiens (Human), this protein is Peptidase inhibitor 16 (PI16).